The following is a 351-amino-acid chain: Methionine import ATP-binding protein MetN (351 aa).

The ABC transporter domain maps to 2–241; that stretch reads IELRNVTKTY…PKTEIAKKFT (240 aa). ATP is bound at residue 38 to 45; it reads GKSGAGKS.

This sequence belongs to the ABC transporter superfamily. Methionine importer (TC 3.A.1.24) family. As to quaternary structure, the complex is composed of two ATP-binding proteins (MetN), two transmembrane proteins (MetI) and a solute-binding protein (MetQ).

It is found in the cell inner membrane. It catalyses the reaction L-methionine(out) + ATP + H2O = L-methionine(in) + ADP + phosphate + H(+). The catalysed reaction is D-methionine(out) + ATP + H2O = D-methionine(in) + ADP + phosphate + H(+). In terms of biological role, part of the ABC transporter complex MetNIQ involved in methionine import. Responsible for energy coupling to the transport system. This is Methionine import ATP-binding protein MetN from Coxiella burnetii (strain RSA 493 / Nine Mile phase I).